A 300-amino-acid chain; its full sequence is Centromere protein O (300 aa).

Coiled coils occupy residues 18-42 (LAHL…QSVQ) and 83-109 (NQTV…QAYH). Position 35 is a phosphoserine (Ser35).

Belongs to the CENP-O/MCM21 family. As to quaternary structure, component of the CENPA-CAD complex, composed of CENPI, CENPK, CENPL, CENPO, CENPP, CENPQ, CENPR and CENPS. The CENPA-CAD complex interacts with the CENPA-NAC complex, at least composed of CENPA, CENPC, CENPH, CENPM, CENPN, CENPT and CENPU.

It localises to the nucleus. It is found in the chromosome. Its subcellular location is the centromere. The protein resides in the kinetochore. In terms of biological role, component of the CENPA-CAD (nucleosome distal) complex, a complex recruited to centromeres which is involved in assembly of kinetochore proteins, mitotic progression and chromosome segregation. May be involved in incorporation of newly synthesized CENPA into centromeres via its interaction with the CENPA-NAC complex. Modulates the kinetochore-bound levels of NDC80 complex. In Homo sapiens (Human), this protein is Centromere protein O (CENPO).